Reading from the N-terminus, the 490-residue chain is GTPase Der (490 aa).

EngA-type G domains follow at residues 3-166 (PVVA…MDDV) and 203-376 (IKLA…DSST). GTP-binding positions include 9–16 (GRPNVGKS), 56–60 (DTGGI), 118–121 (NKTD), 209–216 (GRPNVGKS), 256–260 (DTAGV), and 321–324 (NKWD). One can recognise a KH-like domain in the interval 377 to 461 (RRVSTAMLTR…PIRIQFKEGE (85 aa)).

Belongs to the TRAFAC class TrmE-Era-EngA-EngB-Septin-like GTPase superfamily. EngA (Der) GTPase family. As to quaternary structure, associates with the 50S ribosomal subunit.

In terms of biological role, GTPase that plays an essential role in the late steps of ribosome biogenesis. The sequence is that of GTPase Der from Salmonella choleraesuis (strain SC-B67).